The primary structure comprises 482 residues: Cardiolipin synthase (482 aa).

The next 2 helical transmembrane spans lie at 4–24 (LAYL…VTVF) and 34–54 (WAWL…YLIF). PLD phosphodiesterase domains follow at residues 217-244 (LNYR…GDEY) and 395-422 (DNGF…DFRS). Catalysis depends on residues His-222, Lys-224, Asp-229, His-400, Lys-402, and Asp-407.

The protein belongs to the phospholipase D family. Cardiolipin synthase subfamily.

The protein localises to the cell membrane. It carries out the reaction 2 a 1,2-diacyl-sn-glycero-3-phospho-(1'-sn-glycerol) = a cardiolipin + glycerol. Functionally, catalyzes the reversible phosphatidyl group transfer from one phosphatidylglycerol molecule to another to form cardiolipin (CL) (diphosphatidylglycerol) and glycerol. In Listeria welshimeri serovar 6b (strain ATCC 35897 / DSM 20650 / CCUG 15529 / CIP 8149 / NCTC 11857 / SLCC 5334 / V8), this protein is Cardiolipin synthase (cls).